A 342-amino-acid polypeptide reads, in one-letter code: Tetraacyldisaccharide 4'-kinase (342 aa).

An ATP-binding site is contributed by 68–75; sequence TVGGTGKT.

Belongs to the LpxK family.

The enzyme catalyses a lipid A disaccharide + ATP = a lipid IVA + ADP + H(+). It functions in the pathway glycolipid biosynthesis; lipid IV(A) biosynthesis; lipid IV(A) from (3R)-3-hydroxytetradecanoyl-[acyl-carrier-protein] and UDP-N-acetyl-alpha-D-glucosamine: step 6/6. In terms of biological role, transfers the gamma-phosphate of ATP to the 4'-position of a tetraacyldisaccharide 1-phosphate intermediate (termed DS-1-P) to form tetraacyldisaccharide 1,4'-bis-phosphate (lipid IVA). In Burkholderia ambifaria (strain ATCC BAA-244 / DSM 16087 / CCUG 44356 / LMG 19182 / AMMD) (Burkholderia cepacia (strain AMMD)), this protein is Tetraacyldisaccharide 4'-kinase.